We begin with the raw amino-acid sequence, 72 residues long: Toxin Acra II-1 (72 aa).

Residues 3-67 enclose the LCN-type CS-alpha/beta domain; the sequence is VPGNYPLNTY…VWNAAKNYCK (65 aa). 3 cysteine pairs are disulfide-bonded: Cys18/Cys41, Cys27/Cys46, and Cys31/Cys48.

Belongs to the long (3 C-C) scorpion toxin superfamily. Sodium channel inhibitor family. Beta subfamily. Expressed by the venom gland.

It is found in the secreted. Its function is as follows. Binds to sodium channels (Nav) and affects the channel activation process. This is Toxin Acra II-1 from Androctonus crassicauda (Arabian fat-tailed scorpion).